We begin with the raw amino-acid sequence, 106 residues long: Large ribosomal subunit protein eL42 (106 aa).

The segment at 34-53 is disordered; sequence YAQGRRRYDRKRSGYGGQTK. Residue K53 is modified to N6-methyllysine.

Belongs to the eukaryotic ribosomal protein eL42 family.

The protein resides in the cytoplasm. This is Large ribosomal subunit protein eL42 (RPL36AL) from Pongo abelii (Sumatran orangutan).